We begin with the raw amino-acid sequence, 391 residues long: NADH-quinone oxidoreductase subunit D (391 aa).

This sequence belongs to the complex I 49 kDa subunit family. NDH-1 is composed of 14 different subunits. Subunits NuoB, C, D, E, F, and G constitute the peripheral sector of the complex.

The protein localises to the cell inner membrane. It catalyses the reaction a quinone + NADH + 5 H(+)(in) = a quinol + NAD(+) + 4 H(+)(out). NDH-1 shuttles electrons from NADH, via FMN and iron-sulfur (Fe-S) centers, to quinones in the respiratory chain. The immediate electron acceptor for the enzyme in this species is believed to be ubiquinone. Couples the redox reaction to proton translocation (for every two electrons transferred, four hydrogen ions are translocated across the cytoplasmic membrane), and thus conserves the redox energy in a proton gradient. In Rickettsia canadensis (strain McKiel), this protein is NADH-quinone oxidoreductase subunit D.